A 461-amino-acid chain; its full sequence is Mycosin-3 (461 aa).

An N-terminal signal peptide occupies residues 1 to 25 (MIRAAFACLAATVVVAGWWTPPAWA). A Peptidase S8 domain is found at 64 to 397 (DPGVPTPSQT…AGNLDAVAAL (334 aa)). Active-site charge relay system residues include aspartate 95, histidine 126, and serine 342. Residues 432–452 (AFAGAAALSVLVGLTAATVAI) traverse the membrane as a helical segment.

This sequence belongs to the peptidase S8 family.

The protein localises to the cell membrane. This Mycobacterium tuberculosis (strain ATCC 25618 / H37Rv) protein is Mycosin-3.